We begin with the raw amino-acid sequence, 2622 residues long: Ankyrin-3 (2622 aa).

The segment at 1-44 is disordered; it reads MAHAASQLKKNRDLEINAEEETEKKKKHRKRSRDRKKKSDANAS. Residues 25–38 show a composition bias toward basic residues; it reads KKKHRKRSRDRKKK. Ser39 carries the phosphoserine modification. 23 ANK repeats span residues 73–102, 106–135, 139–168, 172–201, 203–230, 242–271, 275–304, 308–337, 341–370, 374–403, 407–436, 440–469, 473–502, 506–535, 539–568, 572–601, 605–634, 638–667, 671–700, 704–733, 737–766, 770–799, and 803–832; these read NGLNALHLASKEGHVEVVSELLQREANVDA, KGNTALHIASLAGQAEVVKVLVTNGANVNA, NGFTPLYMAAQENHLEVVRFLLDNGASQSL, DGFTPLAVALQQGHDQVVSLLLENDTKGKV, LPALHIAARKDDTKAAALLLQNDTNADI, SGFTPLHIAAHYGNINVATLLLNRAAAVDF, NDITPLHVASKRGNANMVKLLLDRGAKIDA, DGLTPLHCGARSGHEQVVEMLLDRAAPILS, NGLSPLHMATQGDHLNCVQLLLQHNVPVDD, DYLTALHVAAHCGHYKVAKVLLDKKANPNA, NGFTPLHIACKKNRIRVMELLLKHGASIQA, SGLTPIHVAAFMGHVNIVSQLMHHGASPNT, RGETALHMAARSGQAEVVRYLVQDGAQVEA, DDQTPLHISARLGKADIVQQLLQQGASPNA, SGYTPLHLSAREGHEDVAAFLLDHGASLSI, KGFTPLHVAAKYGKLEVASLLLQKSASPDA, SGLTPLHVAAHYDNQKVALLLLDQGASPHA, NGYTPLHIAAKKNQMDIATSLLEYGADANA, QGIASVHLAAQEGHVDMVSLLLSRNANVNL, SGLTPLHLAAQEDRVNVAEVLVNQGAHVDA, MGYTPLHVGCHYGNIKIVNFLLQHSAKVNA, NGYTPLHQAAQQGHTHIINVLLQNNASPNE, and NGNTALAIARRLGYISVVDTLKVVTEEIMT. A Phosphoserine modification is found at Ser631. Residues Val851, Ser855, Ser869, Ser875, Ser921, Ser924, Ser930, Ser965, Ser967, and Ser1121 each carry the phosphoserine modification. The tract at residues 868–889 is disordered; the sequence is LSDGEYISDGEEGEDAITGDTD. The span at 873–884 shows a compositional bias: acidic residues; the sequence is YISDGEEGEDAI. ZU5 domains follow at residues 992–1147 and 1149–1296; these read FLVS…VVSR and KQES…LADC. A phosphoserine mark is found at Ser1458 and Ser1469. Residues 1510 to 1539 are disordered; sequence TPITVPGPAKSGSLSSSPSNTPSASPLKSI. A compositionally biased stretch (low complexity) spans 1515–1536; that stretch reads PGPAKSGSLSSSPSNTPSASPL. A phosphoserine mark is found at Ser1621, Ser1624, Ser1679, Ser1984, Ser2102, Ser2114, and Ser2117. 3 disordered regions span residues 1968-1992, 2099-2147, and 2292-2312; these read VESKGPPKSPKSDKGHSPEDDWTEF, ILES…FHEV, and SPDVAKSAAETSAQHAEKDNQ. The segment covering 1977 to 1986 has biased composition (basic and acidic residues); the sequence is PKSDKGHSPE. The span at 2106–2127 shows a compositional bias: basic and acidic residues; that stretch reads FSQHDQDKSPLSDSGFETRSEK. Positions 2128-2137 are enriched in polar residues; it reads TPSAPQSAES. The region spanning 2336–2420 is the Death domain; it reads TDIRMAIVAD…DIVTLLEGPI (85 aa). Residues Ser2457, Ser2475, and Ser2544 each carry the phosphoserine modification. Residues 2568–2622 are disordered; sequence CVPVGMKKMTRTPADGKARLNLQEEEGSARSEPKQGEGYKVKTKKEIRNVEKKAH. A compositionally biased stretch (basic and acidic residues) spans 2594–2622; sequence GSARSEPKQGEGYKVKTKKEIRNVEKKAH.

In terms of assembly, may be a constituent of a NFASC/NRCAM/ankyrin G complex. Interacts with RHBG. Directly interacts with DMD and betaDAG1; this interaction does not interfere with DMD-binding and is required for DMD and betaDAG1 retention at costameres. Interacts (via N-terminal ANK repeats) with SCHIP1 isoform 7 (via C-terminus); this interaction is required for the localization at axon initial segments (AISs) and nodes of Ranvier (NRs). Interacts with PLEC and FLNC. Interacts (via ANK repeats) with IQCJ-SCHIP1; required for IQCJ-SCHIP1 localization at axon initial segments (AIS) and nodes of Ranvier. Interacts with SCHIP1. Interacts with KCNA1; this inhibits channel activity. Interacts with SCN5A. Interacts with PKP2 and GJA1/CX43. Interacts (via its C-terminal muscle-specific Obscurin/Titin-Binding-related domain sequence) with PLEC and FLNC. Expressed in the heart (at protein level). Expressed in skeletal muscle (at protein level). Expressed at highest levels in brain and testis, followed by skin, kidney, liver and spleen. As to expression, may be specifically expressed in muscle tissues, including heart and skeletal muscle (extensor digitorum longus) (at protein level). In terms of tissue distribution, expressed in skeletal muscle, brain, lung, heart, testes and kidney.

It is found in the cytoplasm. It localises to the cytoskeleton. Its subcellular location is the cell projection. The protein resides in the axon. The protein localises to the cell membrane. It is found in the sarcolemma. It localises to the postsynaptic cell membrane. Its subcellular location is the lysosome. The protein resides in the T-tubule. Membrane-cytoskeleton linker. May participate in the maintenance/targeting of ion channels and cell adhesion molecules at the nodes of Ranvier and axonal initial segments. In skeletal muscle, required for costamere localization of DMD and betaDAG1. Regulates KCNA1 channel activity in function of dietary Mg(2+) levels, and thereby contributes to the regulation of renal Mg(2+) reabsorption. Required for intracellular adhesion and junctional conductance in myocytes, potentially via stabilization of GJA1/CX43 protein abundance and promotion of PKP2, GJA1/CX43, and SCN5A/Nav1.5 localization to cell-cell junctions. In Rattus norvegicus (Rat), this protein is Ankyrin-3 (Ank3).